A 416-amino-acid polypeptide reads, in one-letter code: Kelch repeat-containing protein At1g19460 (416 aa).

Residues 1–11 (MANISEISGDS) are compositionally biased toward polar residues. The interval 1-55 (MANISEISGDSNDGGDPNKKPEEQVLRRSRRIATRNENQNKKPKEEEEKDNRSVS) is disordered. 2 stretches are compositionally biased toward basic and acidic residues: residues 16–26 (DPNKKPEEQVL) and 38–52 (NQNKKPKEEEEKDNR). Kelch repeat units follow at residues 156–202 (EMYV…VFDG), 203–250 (KIYV…FAHA), 255–293 (KLYILGSRCLIYEPKRNGEWDATVNANPIWNLWKVPCTM), and 294–344 (QCVI…SDGS).

The sequence is that of Kelch repeat-containing protein At1g19460 from Arabidopsis thaliana (Mouse-ear cress).